A 364-amino-acid polypeptide reads, in one-letter code: MMNKFFTYYSINAVINCEIESTNPFIIANEIMRVDNSIARSYTIFNSFQNFIDIRYKFPYCHEIIVDHTKCQKSSDPSIDKLMREGGRLVFDIDVAYNEYPNIPDNIQDQIEIIIKHTFNKYFIDIDCDNLDYVWSHCNNPIKLSMHLTVKNILFDNWISMSKFFYGKFVYEWNKHNEWINGNDLIDKQIVKKRTSLRMVGSSKINGNKLVFKDDYCLKDSLIRIYSESDINQLDVININRIKSKYQNQLTTISTVSLKSNNSVYYSNDSNDSTISINPKLFGKLFFLINSLIPNIFRINKINGNIIQLTRLKSAKCLLSDKIHEKENAYLIIKPIDIDQEYYEIIFGCYRQCNLPFTIGKIHV.

This is an uncharacterized protein from Acanthamoeba polyphaga mimivirus (APMV).